The chain runs to 354 residues: Uroporphyrinogen decarboxylase (354 aa).

Residues arginine 27–arginine 31, aspartate 77, tyrosine 154, threonine 209, and histidine 327 each bind substrate.

Belongs to the uroporphyrinogen decarboxylase family. As to quaternary structure, homodimer.

The protein localises to the cytoplasm. It catalyses the reaction uroporphyrinogen III + 4 H(+) = coproporphyrinogen III + 4 CO2. It participates in porphyrin-containing compound metabolism; protoporphyrin-IX biosynthesis; coproporphyrinogen-III from 5-aminolevulinate: step 4/4. Its function is as follows. Catalyzes the decarboxylation of four acetate groups of uroporphyrinogen-III to yield coproporphyrinogen-III. This is Uroporphyrinogen decarboxylase from Escherichia coli (strain 55989 / EAEC).